The primary structure comprises 615 residues: Melanopsin-B (615 aa).

Residues 1–19 (MDMDRGFYRKVDVPDHAHY) are Extracellular-facing. Residues 20-40 (VIAFFVLIIGVVGVTGNALVM) traverse the membrane as a helical segment. The Cytoplasmic segment spans residues 41–56 (YAFLCNKKLRTPPNYF). The helical transmembrane segment at 57 to 77 (IMNLAVSDFLMAITQSPIFFI) threads the bilayer. Residues 78–93 (NSLFKEWIFGETGCRM) lie on the Extracellular side of the membrane. An intrachain disulfide couples Cys91 to Cys169. A helical transmembrane segment spans residues 94 to 114 (YAFCGALFGITSMINLLAISL). The Cytoplasmic segment spans residues 115–136 (DRYIVITKPPQAIRWVSGRRTM). The helical transmembrane segment at 137 to 157 (VVILLVWLYSLAWSLAPLLGW) threads the bilayer. Residues 158-189 (SSYIPEGLMTSCTWDYVTSTPANKGYTLMLCC) lie on the Extracellular side of the membrane. A helical transmembrane segment spans residues 190–210 (FVFFIPLGIISYCYLCMFLAI). Residues 211-244 (RSAGREIERLGTQVRKSTLMQQQTIKTEWKLTKV) are Cytoplasmic-facing. The helical transmembrane segment at 245–265 (AFVVIIVYVHSWSPYACVTLI) threads the bilayer. At 266 to 279 (AWAGYGSHLSPYSK) the chain is on the extracellular side. The helical transmembrane segment at 280-300 (AVPAVIAKASAIYNPFIYAII) threads the bilayer. Lys287 bears the N6-(retinylidene)lysine mark. Over 301–615 (HSKYRDTLAE…RNLEESFMAL (315 aa)) the chain is Cytoplasmic. Disordered stretches follow at residues 390 to 420 (LGRS…TVAD) and 465 to 502 (NKHP…QNHP). The segment covering 401 to 415 (AQQNRQTRSSDTLEQ) has biased composition (polar residues). A compositionally biased stretch (basic residues) spans 469–478 (NNNHKNHNNR).

It belongs to the G-protein coupled receptor 1 family. Opsin subfamily. Expressed in the inner nuclear layer of the retina, possibly in amacrine and ganglion cells. Expressed in a subpopulation of neurons in the dorsal habenula.

The protein resides in the cell membrane. Functionally, photoreceptor implicated in non-image-forming responses to light. In Gadus morhua (Atlantic cod), this protein is Melanopsin-B (opn4b).